The primary structure comprises 428 residues: Phosphoglucosamine mutase (428 aa).

The active-site Phosphoserine intermediate is serine 96. Residues serine 96, aspartate 229, aspartate 231, and aspartate 233 each contribute to the Mg(2+) site. At serine 96 the chain carries Phosphoserine.

It belongs to the phosphohexose mutase family. Mg(2+) is required as a cofactor. In terms of processing, activated by phosphorylation.

The catalysed reaction is alpha-D-glucosamine 1-phosphate = D-glucosamine 6-phosphate. Its function is as follows. Catalyzes the conversion of glucosamine-6-phosphate to glucosamine-1-phosphate. This is Phosphoglucosamine mutase from Thermotoga neapolitana (strain ATCC 49049 / DSM 4359 / NBRC 107923 / NS-E).